A 329-amino-acid chain; its full sequence is Mo25-like protein (329 aa).

This sequence belongs to the Mo25 family.

The polypeptide is Mo25-like protein (pmo25) (Schizosaccharomyces pombe (strain 972 / ATCC 24843) (Fission yeast)).